Reading from the N-terminus, the 211-residue chain is Endo-1,4-beta-xylanase 5 (211 aa).

Residues 1-16 form the signal peptide; sequence MKVTAAFASLLLTAFA. One can recognise a GH11 domain in the interval 19 to 210; it reads APEPVLVSRS…GVGSASVTIS (192 aa). Residue Glu-106 is the Nucleophile of the active site. Catalysis depends on Glu-197, which acts as the Proton donor.

Belongs to the glycosyl hydrolase 11 (cellulase G) family.

It is found in the secreted. The catalysed reaction is Endohydrolysis of (1-&gt;4)-beta-D-xylosidic linkages in xylans.. It participates in glycan degradation; xylan degradation. In terms of biological role, endo-1,4-beta-xylanase involved in the hydrolysis of xylan, a major structural heterogeneous polysaccharide found in plant biomass representing the second most abundant polysaccharide in the biosphere, after cellulose. The protein is Endo-1,4-beta-xylanase 5 (XYN5) of Aspergillus niger.